We begin with the raw amino-acid sequence, 199 residues long: Peptidyl-tRNA hydrolase (199 aa).

Position 18 (Y18) interacts with tRNA. Catalysis depends on H23, which acts as the Proton acceptor. Residues Y72, N74, and N120 each coordinate tRNA.

The protein belongs to the PTH family. In terms of assembly, monomer.

The protein resides in the cytoplasm. It catalyses the reaction an N-acyl-L-alpha-aminoacyl-tRNA + H2O = an N-acyl-L-amino acid + a tRNA + H(+). Its function is as follows. Hydrolyzes ribosome-free peptidyl-tRNAs (with 1 or more amino acids incorporated), which drop off the ribosome during protein synthesis, or as a result of ribosome stalling. Catalyzes the release of premature peptidyl moieties from peptidyl-tRNA molecules trapped in stalled 50S ribosomal subunits, and thus maintains levels of free tRNAs and 50S ribosomes. This chain is Peptidyl-tRNA hydrolase, found in Bifidobacterium longum (strain DJO10A).